Consider the following 225-residue polypeptide: NAD(P)H-quinone oxidoreductase subunit K, chloroplastic (225 aa).

[4Fe-4S] cluster is bound by residues cysteine 43, cysteine 44, cysteine 108, and cysteine 139.

Belongs to the complex I 20 kDa subunit family. In terms of assembly, NDH is composed of at least 16 different subunits, 5 of which are encoded in the nucleus. It depends on [4Fe-4S] cluster as a cofactor.

The protein localises to the plastid. It is found in the chloroplast thylakoid membrane. The catalysed reaction is a plastoquinone + NADH + (n+1) H(+)(in) = a plastoquinol + NAD(+) + n H(+)(out). It catalyses the reaction a plastoquinone + NADPH + (n+1) H(+)(in) = a plastoquinol + NADP(+) + n H(+)(out). NDH shuttles electrons from NAD(P)H:plastoquinone, via FMN and iron-sulfur (Fe-S) centers, to quinones in the photosynthetic chain and possibly in a chloroplast respiratory chain. The immediate electron acceptor for the enzyme in this species is believed to be plastoquinone. Couples the redox reaction to proton translocation, and thus conserves the redox energy in a proton gradient. The protein is NAD(P)H-quinone oxidoreductase subunit K, chloroplastic of Lolium perenne (Perennial ryegrass).